The following is a 304-amino-acid chain: Acetylglutamate kinase (304 aa).

Substrate is bound by residues 82 to 83 (GG), Arg104, and Asn197.

The protein belongs to the acetylglutamate kinase family. ArgB subfamily.

Its subcellular location is the cytoplasm. The catalysed reaction is N-acetyl-L-glutamate + ATP = N-acetyl-L-glutamyl 5-phosphate + ADP. The protein operates within amino-acid biosynthesis; L-arginine biosynthesis; N(2)-acetyl-L-ornithine from L-glutamate: step 2/4. In terms of biological role, catalyzes the ATP-dependent phosphorylation of N-acetyl-L-glutamate. This is Acetylglutamate kinase from Prochlorococcus marinus (strain NATL1A).